Consider the following 216-residue polypeptide: Somatotropin (216 aa).

The signal sequence occupies residues Met1–Ala26. Position 45 (His45) interacts with Zn(2+). A disulfide bridge links Cys78 with Cys189. Residue Ser131 is modified to Phosphoserine. Glu198 is a binding site for Zn(2+). A disulfide bond links Cys206 and Cys214.

This sequence belongs to the somatotropin/prolactin family.

It localises to the secreted. Plays an important role in growth control. Its major role in stimulating body growth is to stimulate the liver and other tissues to secrete IGF1. It stimulates both the differentiation and proliferation of myoblasts. It also stimulates amino acid uptake and protein synthesis in muscle and other tissues. This is Somatotropin (GH1) from Balaenoptera physalus (Fin whale).